Consider the following 316-residue polypeptide: Methionyl-tRNA formyltransferase (316 aa).

Residue 111-114 (GLLP) participates in (6S)-5,6,7,8-tetrahydrofolate binding.

The protein belongs to the Fmt family.

It carries out the reaction L-methionyl-tRNA(fMet) + (6R)-10-formyltetrahydrofolate = N-formyl-L-methionyl-tRNA(fMet) + (6S)-5,6,7,8-tetrahydrofolate + H(+). Its function is as follows. Attaches a formyl group to the free amino group of methionyl-tRNA(fMet). The formyl group appears to play a dual role in the initiator identity of N-formylmethionyl-tRNA by promoting its recognition by IF2 and preventing the misappropriation of this tRNA by the elongation apparatus. This Chlamydia trachomatis serovar A (strain ATCC VR-571B / DSM 19440 / HAR-13) protein is Methionyl-tRNA formyltransferase.